Consider the following 311-residue polypeptide: Ribosomal RNA small subunit methyltransferase H (311 aa).

S-adenosyl-L-methionine-binding positions include 32-34 (AGH), D52, F79, D100, and Q107. The segment covering 289 to 298 (SKEELEENNR) has biased composition (basic and acidic residues). The tract at residues 289–311 (SKEELEENNRARSAKLRIAEKRK) is disordered. Residues 300 to 311 (RSAKLRIAEKRK) show a composition bias toward basic residues.

This sequence belongs to the methyltransferase superfamily. RsmH family.

It is found in the cytoplasm. The enzyme catalyses cytidine(1402) in 16S rRNA + S-adenosyl-L-methionine = N(4)-methylcytidine(1402) in 16S rRNA + S-adenosyl-L-homocysteine + H(+). In terms of biological role, specifically methylates the N4 position of cytidine in position 1402 (C1402) of 16S rRNA. This Bacillus velezensis (strain DSM 23117 / BGSC 10A6 / LMG 26770 / FZB42) (Bacillus amyloliquefaciens subsp. plantarum) protein is Ribosomal RNA small subunit methyltransferase H.